Consider the following 239-residue polypeptide: Putative HTH-type transcriptional regulator YkgA (239 aa).

The region spanning 19-117 (QQLLEWIECN…GCSPREYRHR (99 aa)) is the HTH araC/xylS-type domain. 2 DNA-binding regions (H-T-H motif) span residues 36–57 (EDIA…RNFM) and 84–107 (MLDI…KKLF).

The chain is Putative HTH-type transcriptional regulator YkgA (ykgA) from Escherichia coli (strain K12).